Here is a 326-residue protein sequence, read N- to C-terminus: o-succinylbenzoate synthase (326 aa).

Residue lysine 110 is the Proton donor of the active site. Residues aspartate 138, glutamate 165, and aspartate 188 each coordinate Mg(2+). Catalysis depends on lysine 212, which acts as the Proton acceptor.

It belongs to the mandelate racemase/muconate lactonizing enzyme family. MenC type 1 subfamily. A divalent metal cation serves as cofactor.

It catalyses the reaction (1R,6R)-6-hydroxy-2-succinyl-cyclohexa-2,4-diene-1-carboxylate = 2-succinylbenzoate + H2O. Its pathway is quinol/quinone metabolism; 1,4-dihydroxy-2-naphthoate biosynthesis; 1,4-dihydroxy-2-naphthoate from chorismate: step 4/7. It participates in quinol/quinone metabolism; menaquinone biosynthesis. Its function is as follows. Converts 2-succinyl-6-hydroxy-2,4-cyclohexadiene-1-carboxylate (SHCHC) to 2-succinylbenzoate (OSB). The chain is o-succinylbenzoate synthase from Mycobacterium bovis (strain ATCC BAA-935 / AF2122/97).